Consider the following 279-residue polypeptide: MQTVEKLTTETLEKPLIIAGKKFTSRLMTGTGKYPTIETMQQSIEASKCEIITVAVRRVQTQAPGHKGLAEAIDWQKVWMLPNTAGCQTAEDAVRVARLGREMAKLLGQEDNNFVKLEVIPDSKYLLPDPIGTLQAAEQLIKEGFAVLPYINADPLLAKRLEEAGCSTVMPLGSPIGSGQGIQNAANISIIIDNSTVPVVIDAGIGTPSEATQAMEMGADALLINSAIALAKNPPIMAKAMGMATESGRLAYLAGRIPKKSYATPSSPVTGKINTTTSE.

Residue lysine 116 is the Schiff-base intermediate with DXP of the active site. Residues glycine 177, 203-204, and 225-226 each bind 1-deoxy-D-xylulose 5-phosphate; these read AG and NS.

Belongs to the ThiG family. Homotetramer. Forms heterodimers with either ThiH or ThiS.

It is found in the cytoplasm. The enzyme catalyses [ThiS sulfur-carrier protein]-C-terminal-Gly-aminoethanethioate + 2-iminoacetate + 1-deoxy-D-xylulose 5-phosphate = [ThiS sulfur-carrier protein]-C-terminal Gly-Gly + 2-[(2R,5Z)-2-carboxy-4-methylthiazol-5(2H)-ylidene]ethyl phosphate + 2 H2O + H(+). Its pathway is cofactor biosynthesis; thiamine diphosphate biosynthesis. Catalyzes the rearrangement of 1-deoxy-D-xylulose 5-phosphate (DXP) to produce the thiazole phosphate moiety of thiamine. Sulfur is provided by the thiocarboxylate moiety of the carrier protein ThiS. In vitro, sulfur can be provided by H(2)S. In Trichodesmium erythraeum (strain IMS101), this protein is Thiazole synthase.